The sequence spans 184 residues: Large ribosomal subunit protein uL6 (184 aa).

This sequence belongs to the universal ribosomal protein uL6 family. As to quaternary structure, part of the 50S ribosomal subunit.

Functionally, this protein binds to the 23S rRNA, and is important in its secondary structure. It is located near the subunit interface in the base of the L7/L12 stalk, and near the tRNA binding site of the peptidyltransferase center. This is Large ribosomal subunit protein uL6 from Thermotoga maritima (strain ATCC 43589 / DSM 3109 / JCM 10099 / NBRC 100826 / MSB8).